Reading from the N-terminus, the 588-residue chain is MASFTTSPCTSAAPKTPKSLSSSATISSPLPKPSQIHIATAKRTHHFKVSCNAPNGDSQPKLDRRDVLLGLGGLAGAASLINNPLAFAEPIHAPEISKCVVPPKDLPPDAIVDNCCPPLATNVIPYKVPKTSPSAMKIRPAIHRMDKEYIAKFEKAIRLMKELPADDPRNFYQQALVHCAYCNGGYVQTDYPDKEIQVHNSWLFFPFHRWYLYFYERILGKLIGDPTFGLPFWNWDTPAGMLIPQYFRNQNSPLYDENRNQSHLPLVMDLGYAGTDTDVTDQERISNNLALMYKSMVTNAGTAELFLGKPYKAGDDPVNKGGGSIENIPHTPVHRWVGDVKPRTQNGEDMGNFYSAGRDILFYCHHSNVDRMWTIWQQLGGKGRRRDFTDSDWLDATFIFYDENKQAVRVRVGDALDNQKLGYKYEFTNLPWLNSKPLPTKKKTGLAARSKAPFVTDVFPLTLDKVVQVKVPRPKKSRSKEEKEAEEEILEIQGIEVAIDQYAKFDVYLNDEDEPEAGKEKAEYAGSFAHLPHKHTGSKKIRTSLSLGLNEPLEDLGAEDDDAVLVTLAPKVGGGVVTVENIKIVYGS.

The segment covering 1 to 10 (MASFTTSPCT) has biased composition (polar residues). The disordered stretch occupies residues 1–32 (MASFTTSPCTSAAPKTPKSLSSSATISSPLPK). A chloroplast-targeting transit peptide spans 1–50 (MASFTTSPCTSAAPKTPKSLSSSATISSPLPKPSQIHIATAKRTHHFKVS). Positions 16–29 (TPKSLSSSATISSP) are enriched in low complexity. The transit peptide at 51–88 (CNAPNGDSQPKLDRRDVLLGLGGLAGAASLINNPLAFA) directs the protein to the thylakoid. 2 cysteine pairs are disulfide-bonded: C99–C116 and C115–C179. Residues H178, H199, H208, H330, H334, and H366 each coordinate Cu cation. The segment at residues 182–199 (CNGGYVQTDYPDKEIQVH) is a cross-link (2'-(S-cysteinyl)-histidine (Cys-His)).

The protein belongs to the tyrosinase family. As to quaternary structure, monomer. Cu(2+) is required as a cofactor.

Its subcellular location is the plastid. The protein resides in the chloroplast thylakoid lumen. The catalysed reaction is 2 catechol + O2 = 2 1,2-benzoquinone + 2 H2O. Functionally, catalyzes the oxidation of mono- and o-diphenols to o-diquinones. This chain is Polyphenol oxidase II, chloroplastic (co-2), found in Ipomoea batatas (Sweet potato).